The sequence spans 213 residues: dITP/XTP pyrophosphatase (213 aa).

17 to 22 (SNNAGK) is a binding site for substrate. Positions 49 and 78 each coordinate Mg(2+). D78 (proton acceptor) is an active-site residue. Substrate contacts are provided by residues S79, 164-167 (FGYD), K187, and 192-193 (HR).

The protein belongs to the HAM1 NTPase family. As to quaternary structure, homodimer. Mg(2+) serves as cofactor.

The catalysed reaction is XTP + H2O = XMP + diphosphate + H(+). It catalyses the reaction dITP + H2O = dIMP + diphosphate + H(+). The enzyme catalyses ITP + H2O = IMP + diphosphate + H(+). Functionally, pyrophosphatase that catalyzes the hydrolysis of nucleoside triphosphates to their monophosphate derivatives, with a high preference for the non-canonical purine nucleotides XTP (xanthosine triphosphate), dITP (deoxyinosine triphosphate) and ITP. Seems to function as a house-cleaning enzyme that removes non-canonical purine nucleotides from the nucleotide pool, thus preventing their incorporation into DNA/RNA and avoiding chromosomal lesions. The chain is dITP/XTP pyrophosphatase from Bordetella bronchiseptica (strain ATCC BAA-588 / NCTC 13252 / RB50) (Alcaligenes bronchisepticus).